Reading from the N-terminus, the 373-residue chain is uncharacterized protein (373 aa).

Residues 14-168 form the CP-type G domain; it reads KKIVNKIIDE…LMDTPGVLEM (155 aa). 117–124 is a GTP binding site; it reads GYPNVGKS.

The protein belongs to the TRAFAC class YlqF/YawG GTPase family.

This is an uncharacterized protein from Methanocaldococcus jannaschii (strain ATCC 43067 / DSM 2661 / JAL-1 / JCM 10045 / NBRC 100440) (Methanococcus jannaschii).